Reading from the N-terminus, the 459-residue chain is UDP-N-acetylmuramoyl-tripeptide--D-alanyl-D-alanine ligase (459 aa).

Residue 121–127 (GSSGKTT) participates in ATP binding.

Belongs to the MurCDEF family. MurF subfamily.

The protein resides in the cytoplasm. The catalysed reaction is D-alanyl-D-alanine + UDP-N-acetyl-alpha-D-muramoyl-L-alanyl-gamma-D-glutamyl-meso-2,6-diaminopimelate + ATP = UDP-N-acetyl-alpha-D-muramoyl-L-alanyl-gamma-D-glutamyl-meso-2,6-diaminopimeloyl-D-alanyl-D-alanine + ADP + phosphate + H(+). The protein operates within cell wall biogenesis; peptidoglycan biosynthesis. Its function is as follows. Involved in cell wall formation. Catalyzes the final step in the synthesis of UDP-N-acetylmuramoyl-pentapeptide, the precursor of murein. This is UDP-N-acetylmuramoyl-tripeptide--D-alanyl-D-alanine ligase from Treponema pallidum (strain Nichols).